A 162-amino-acid polypeptide reads, in one-letter code: 2-C-methyl-D-erythritol 2,4-cyclodiphosphate synthase (162 aa).

2 residues coordinate a divalent metal cation: D8 and H10. 4-CDP-2-C-methyl-D-erythritol 2-phosphate is bound by residues 8–10 (DVH) and 36–37 (HS). Position 44 (H44) interacts with a divalent metal cation. 4-CDP-2-C-methyl-D-erythritol 2-phosphate contacts are provided by residues 58 to 60 (DIG), 63 to 67 (FPDTD), 102 to 108 (AQAPKMA), 134 to 137 (TTTE), F141, and R144.

The protein belongs to the IspF family. As to quaternary structure, homotrimer. A divalent metal cation is required as a cofactor.

It catalyses the reaction 4-CDP-2-C-methyl-D-erythritol 2-phosphate = 2-C-methyl-D-erythritol 2,4-cyclic diphosphate + CMP. It functions in the pathway isoprenoid biosynthesis; isopentenyl diphosphate biosynthesis via DXP pathway; isopentenyl diphosphate from 1-deoxy-D-xylulose 5-phosphate: step 4/6. In terms of biological role, involved in the biosynthesis of isopentenyl diphosphate (IPP) and dimethylallyl diphosphate (DMAPP), two major building blocks of isoprenoid compounds. Catalyzes the conversion of 4-diphosphocytidyl-2-C-methyl-D-erythritol 2-phosphate (CDP-ME2P) to 2-C-methyl-D-erythritol 2,4-cyclodiphosphate (ME-CPP) with a corresponding release of cytidine 5-monophosphate (CMP). The chain is 2-C-methyl-D-erythritol 2,4-cyclodiphosphate synthase from Yersinia pseudotuberculosis serotype O:1b (strain IP 31758).